A 702-amino-acid polypeptide reads, in one-letter code: Elongation factor G (702 aa).

A tr-type G domain is found at 8-290 (ERYRNIGISA…GVVEYLPSPV (283 aa)). GTP contacts are provided by residues 17–24 (AHIDAGKT), 88–92 (DTPGH), and 142–145 (NKMD).

The protein belongs to the TRAFAC class translation factor GTPase superfamily. Classic translation factor GTPase family. EF-G/EF-2 subfamily.

It localises to the cytoplasm. Functionally, catalyzes the GTP-dependent ribosomal translocation step during translation elongation. During this step, the ribosome changes from the pre-translocational (PRE) to the post-translocational (POST) state as the newly formed A-site-bound peptidyl-tRNA and P-site-bound deacylated tRNA move to the P and E sites, respectively. Catalyzes the coordinated movement of the two tRNA molecules, the mRNA and conformational changes in the ribosome. This chain is Elongation factor G, found in Janthinobacterium sp. (strain Marseille) (Minibacterium massiliensis).